We begin with the raw amino-acid sequence, 364 residues long: DNA replication and repair protein RecF (364 aa).

30 to 37 (GNNGMGKT) contacts ATP.

This sequence belongs to the RecF family.

Its subcellular location is the cytoplasm. In terms of biological role, the RecF protein is involved in DNA metabolism; it is required for DNA replication and normal SOS inducibility. RecF binds preferentially to single-stranded, linear DNA. It also seems to bind ATP. The polypeptide is DNA replication and repair protein RecF (Porphyromonas gingivalis (strain ATCC BAA-308 / W83)).